Consider the following 113-residue polypeptide: Large ribosomal subunit protein uL24 (113 aa).

Belongs to the universal ribosomal protein uL24 family. In terms of assembly, part of the 50S ribosomal subunit.

In terms of biological role, one of two assembly initiator proteins, it binds directly to the 5'-end of the 23S rRNA, where it nucleates assembly of the 50S subunit. One of the proteins that surrounds the polypeptide exit tunnel on the outside of the subunit. This chain is Large ribosomal subunit protein uL24, found in Rickettsia prowazekii (strain Madrid E).